An 830-amino-acid polypeptide reads, in one-letter code: WD repeat-containing protein 75 (830 aa).

9 WD repeats span residues 4–42 (EGVR…KVYS), 46–85 (EECV…KLWD), 89–130 (GILI…QLVS), 144–183 (RQLT…YFFK), 192–230 (LPST…RLWR), 236–275 (QKYT…VEWR), 278–317 (SEKN…TVIH), 323–361 (SAVI…QFYS), and 375–422 (QQEY…KLWN). Residue Lys426 forms a Glycyl lysine isopeptide (Lys-Gly) (interchain with G-Cter in SUMO2) linkage. 4 WD repeats span residues 429–473 (GFVL…KVWI), 486–524 (AWTC…TIWD), 528–568 (WELK…CCWN), and 573–610 (SIQW…FVFK). Residues Ser663 and Ser671 each carry the phosphoserine modification. Lys675 is covalently cross-linked (Glycyl lysine isopeptide (Lys-Gly) (interchain with G-Cter in SUMO2)). A disordered region spans residues 761–807 (KSAEEVPDDVDMEGNKESDDSDEEYDLTEKDKETNNNTDLGEDAIHQ). Phosphoserine is present on residues Ser778 and Ser781. Tyr785 is subject to Phosphotyrosine. Phosphoserine is present on Ser811.

As to quaternary structure, component of the proposed t-UTP subcomplex of the ribosomal small subunit (SSU) processome. SSU processome is composed of more than 70 proteins and the RNA chaperone small nucleolar RNA (snoRNA) U3.

It is found in the nucleus. Its subcellular location is the nucleolus. Functionally, ribosome biogenesis factor. Part of the small subunit (SSU) processome, first precursor of the small eukaryotic ribosomal subunit. During the assembly of the SSU processome in the nucleolus, many ribosome biogenesis factors, an RNA chaperone and ribosomal proteins associate with the nascent pre-rRNA and work in concert to generate RNA folding, modifications, rearrangements and cleavage as well as targeted degradation of pre-ribosomal RNA by the RNA exosome. Involved in nucleolar processing of pre-18S ribosomal RNA. Required for optimal pre-ribosomal RNA transcription by RNA polymerase I. The polypeptide is WD repeat-containing protein 75 (Wdr75) (Mus musculus (Mouse)).